Consider the following 388-residue polypeptide: Chorismate synthase (388 aa).

NADP(+) contacts are provided by Arg-39 and Arg-45. FMN contacts are provided by residues Arg-130 to Ser-132, Asn-251 to Ala-252, Gly-296, Lys-311 to Thr-315, and Arg-337.

Belongs to the chorismate synthase family. Homotetramer. Requires FMNH2 as cofactor.

It carries out the reaction 5-O-(1-carboxyvinyl)-3-phosphoshikimate = chorismate + phosphate. The protein operates within metabolic intermediate biosynthesis; chorismate biosynthesis; chorismate from D-erythrose 4-phosphate and phosphoenolpyruvate: step 7/7. Catalyzes the anti-1,4-elimination of the C-3 phosphate and the C-6 proR hydrogen from 5-enolpyruvylshikimate-3-phosphate (EPSP) to yield chorismate, which is the branch point compound that serves as the starting substrate for the three terminal pathways of aromatic amino acid biosynthesis. This reaction introduces a second double bond into the aromatic ring system. This is Chorismate synthase from Streptococcus thermophilus (strain CNRZ 1066).